A 332-amino-acid chain; its full sequence is Galectin-4 (332 aa).

Galectin domains lie at 19–150 (YHNP…INFI) and 203–332 (FNGR…YVQI). 265–271 (WGSEERK) contacts a beta-D-galactoside. Ser267 carries the phosphoserine modification.

In terms of assembly, monomer.

Its function is as follows. Galectin that binds lactose and a related range of sugars. May be involved in the assembly of adherens junctions. This Bos taurus (Bovine) protein is Galectin-4 (LGALS4).